The primary structure comprises 356 residues: DNA polymerase IV (356 aa).

A UmuC domain is found at 7-188 (IIHIDMDAFY…IPVTKFYGVG (182 aa)). Mg(2+)-binding residues include aspartate 11 and aspartate 106. Glutamate 107 is an active-site residue.

It belongs to the DNA polymerase type-Y family. Monomer. It depends on Mg(2+) as a cofactor.

The protein resides in the cytoplasm. The catalysed reaction is DNA(n) + a 2'-deoxyribonucleoside 5'-triphosphate = DNA(n+1) + diphosphate. Functionally, poorly processive, error-prone DNA polymerase involved in untargeted mutagenesis. Copies undamaged DNA at stalled replication forks, which arise in vivo from mismatched or misaligned primer ends. These misaligned primers can be extended by PolIV. Exhibits no 3'-5' exonuclease (proofreading) activity. May be involved in translesional synthesis, in conjunction with the beta clamp from PolIII. In Listeria monocytogenes serotype 4b (strain CLIP80459), this protein is DNA polymerase IV.